We begin with the raw amino-acid sequence, 291 residues long: Ribosomal RNA small subunit methyltransferase A (291 aa).

Residues His-21, Leu-23, Gly-48, Glu-70, Asp-95, and Asn-115 each coordinate S-adenosyl-L-methionine.

The protein belongs to the class I-like SAM-binding methyltransferase superfamily. rRNA adenine N(6)-methyltransferase family. RsmA subfamily.

The protein resides in the cytoplasm. It catalyses the reaction adenosine(1518)/adenosine(1519) in 16S rRNA + 4 S-adenosyl-L-methionine = N(6)-dimethyladenosine(1518)/N(6)-dimethyladenosine(1519) in 16S rRNA + 4 S-adenosyl-L-homocysteine + 4 H(+). In terms of biological role, specifically dimethylates two adjacent adenosines (A1518 and A1519) in the loop of a conserved hairpin near the 3'-end of 16S rRNA in the 30S particle. May play a critical role in biogenesis of 30S subunits. This Prochlorococcus marinus (strain NATL2A) protein is Ribosomal RNA small subunit methyltransferase A.